Reading from the N-terminus, the 495-residue chain is UDP-N-acetylmuramate--L-alanine ligase (495 aa).

Residue 122–128 (GTHGKTT) participates in ATP binding.

Belongs to the MurCDEF family.

It is found in the cytoplasm. It catalyses the reaction UDP-N-acetyl-alpha-D-muramate + L-alanine + ATP = UDP-N-acetyl-alpha-D-muramoyl-L-alanine + ADP + phosphate + H(+). Its pathway is cell wall biogenesis; peptidoglycan biosynthesis. Cell wall formation. The chain is UDP-N-acetylmuramate--L-alanine ligase from Mycobacterium leprae (strain TN).